Here is a 421-residue protein sequence, read N- to C-terminus: Lipid II:glycine glycyltransferase (421 aa).

Belongs to the FemABX family. As to quaternary structure, monomer.

It is found in the cytoplasm. The catalysed reaction is beta-D-GlcNAc-(1-&gt;4)-Mur2Ac(oyl-L-Ala-D-isoglutaminyl-L-Lys-D-Ala-D-Ala)-di-trans,octa-cis-undecaprenyl diphosphate + glycyl-tRNA(Gly) = beta-D-GlcNAc-(1-&gt;4)-Mur2Ac(oyl-L-Ala-D-isoglutaminyl-L-Lys-(N(6)-Gly)-D-Ala-D-Ala)-di-trans,octa-cis-undecaprenyl diphosphate + tRNA(Gly) + H(+). Catalyzes the incorporation of the first glycine of the pentaglycine interpeptide bridge, which is characteristic of the S.aureus peptidoglycan. This glycine is added to the epsilon-amino group of the L-lysine of the membrane-bound lipid II intermediate (GlcNAc-(beta-1,4)-N-acetylmuramic acid(-L-Ala-D-iGln-L-Lys-D-Ala-D-Ala)-pyrophosphoryl-undecaprenol), using glycyl-tRNA(Gly) as donor, in a ribosome-independent mechanism. Involved in methicillin resistance. The sequence is that of Lipid II:glycine glycyltransferase (femX) from Staphylococcus aureus (strain USA300).